We begin with the raw amino-acid sequence, 336 residues long: Biotin synthase (336 aa).

Residues 55-288 (GEAASLHACS…RTIIKFAAGR (234 aa)) form the Radical SAM core domain. 3 residues coordinate [4Fe-4S] cluster: cysteine 73, cysteine 77, and cysteine 80. 3 residues coordinate [2Fe-2S] cluster: cysteine 152, cysteine 213, and lysine 283.

Belongs to the radical SAM superfamily. Biotin synthase family. As to quaternary structure, homodimer. Requires [4Fe-4S] cluster as cofactor. The cofactor is [2Fe-2S] cluster.

It carries out the reaction (4R,5S)-dethiobiotin + (sulfur carrier)-SH + 2 reduced [2Fe-2S]-[ferredoxin] + 2 S-adenosyl-L-methionine = (sulfur carrier)-H + biotin + 2 5'-deoxyadenosine + 2 L-methionine + 2 oxidized [2Fe-2S]-[ferredoxin]. Its pathway is cofactor biosynthesis; biotin biosynthesis; biotin from 7,8-diaminononanoate: step 2/2. Catalyzes the conversion of dethiobiotin (DTB) to biotin by the insertion of a sulfur atom into dethiobiotin via a radical-based mechanism. The sequence is that of Biotin synthase from Chlorobium limicola (strain DSM 245 / NBRC 103803 / 6330).